The chain runs to 69 residues: Large ribosomal subunit protein bL28 (69 aa).

Belongs to the bacterial ribosomal protein bL28 family.

This is Large ribosomal subunit protein bL28 from Desulfovibrio desulfuricans (strain ATCC 27774 / DSM 6949 / MB).